The chain runs to 363 residues: 2,5-diketocamphane 1,2-monooxygenase 2 (363 aa).

Residues methionine 74 and 186 to 194 (TGLTKNSSS) contribute to the FMN site.

Belongs to the bacterial luciferase oxidoreductase family. In terms of assembly, homodimer. Likely forms a loose transient complex with a P.putida flavin reductase that provides the required FMNH(2) to the enzyme.

The catalysed reaction is (1R,4R)-bornane-2,5-dione + FMNH2 + O2 = (1R,4R)-5-oxo-1,2-campholide + FMN + H2O + H(+). Its pathway is terpene metabolism; (R)-camphor degradation. In terms of biological role, involved in the degradation and assimilation of (+)-camphor, which allows P.putida strain NCIMB 10007 to grow on this enantiomer of camphor as the sole carbon source. Catalyzes the FMNH(2)-dependent lactonization of 2,5-diketocamphane via a Baeyer-Villiger oxidation to produce the unstable lactone 5-oxo-1,2-campholide with (R,R) configuration, that presumably undergoes spontaneous hydrolysis to form 2-oxo-Delta(3)-4,5,5-trimethylcyclopentenylacetate. Is also able to convert (+)-camphor and norcamphor to the corresponding lactone in vitro. Shows no conversion of (-)-camphor, (+)-fenchone, (-)-fenchone, and (+)-nopinone. Acts on other bicyclic ketones and, to a lesser extent, on some 2- and 4-substituted monocyclic ketones. This is 2,5-diketocamphane 1,2-monooxygenase 2 from Pseudomonas putida (Arthrobacter siderocapsulatus).